A 70-amino-acid chain; its full sequence is Large ribosomal subunit protein uL29 (70 aa).

The protein belongs to the universal ribosomal protein uL29 family.

The polypeptide is Large ribosomal subunit protein uL29 (Gloeobacter violaceus (strain ATCC 29082 / PCC 7421)).